The primary structure comprises 607 residues: Elongation factor 4 (607 aa).

One can recognise a tr-type G domain in the interval 6-188; that stretch reads DRIRNFSIIA…AIVARIPAPK (183 aa). GTP-binding positions include 18–23 and 135–138; these read DHGKST and NKID.

It belongs to the TRAFAC class translation factor GTPase superfamily. Classic translation factor GTPase family. LepA subfamily.

It localises to the cell inner membrane. The enzyme catalyses GTP + H2O = GDP + phosphate + H(+). Required for accurate and efficient protein synthesis under certain stress conditions. May act as a fidelity factor of the translation reaction, by catalyzing a one-codon backward translocation of tRNAs on improperly translocated ribosomes. Back-translocation proceeds from a post-translocation (POST) complex to a pre-translocation (PRE) complex, thus giving elongation factor G a second chance to translocate the tRNAs correctly. Binds to ribosomes in a GTP-dependent manner. In Rhizorhabdus wittichii (strain DSM 6014 / CCUG 31198 / JCM 15750 / NBRC 105917 / EY 4224 / RW1) (Sphingomonas wittichii), this protein is Elongation factor 4.